The sequence spans 85 residues: Small cysteine and glycine repeat-containing protein 5 (85 aa).

Positions Cys-4–Gly-69 are 10 X 2 AA repeats of CG.

The protein belongs to the KRTAP type 28 family.

Functionally, in the hair cortex, hair keratin intermediate filaments are embedded in an interfilamentous matrix, consisting of hair keratin-associated proteins (KRTAP), which are essential for the formation of a rigid and resistant hair shaft through their extensive disulfide bond cross-linking with abundant cysteine residues of hair keratins. The matrix proteins include the high-sulfur and high-glycine-tyrosine keratins. The polypeptide is Small cysteine and glycine repeat-containing protein 5 (Homo sapiens (Human)).